The following is a 651-amino-acid chain: Chaperone protein HtpG (651 aa).

Residues 1-353 are a; substrate-binding; the sequence is MAPHVEQLEF…AQDMSLNVSR (353 aa). A b region spans residues 354–569; it reads EILQQDRQIR…TFGITPALAR (216 aa). Residues 570 to 651 form a c region; it reads MYRASGQPVP…RLTRMVGEQS (82 aa).

The protein belongs to the heat shock protein 90 family. As to quaternary structure, homodimer.

The protein localises to the cytoplasm. Functionally, molecular chaperone. Has ATPase activity. This chain is Chaperone protein HtpG, found in Mycolicibacterium gilvum (strain PYR-GCK) (Mycobacterium gilvum (strain PYR-GCK)).